The following is a 504-amino-acid chain: Apoptosis inhibitor 5 (504 aa).

The ARM-like and Heat-like helical repeats stretch occupies residues 1 to 360 (MPTVEELYRN…HQLGRKLPDF (360 aa)). At Lys-251 the chain carries N6-acetyllysine. The interval 370 to 391 (LKDFKIRLQYFARGLQVYIRQL) is leucine-zipper. Thr-399 carries the phosphothreonine modification. A disordered region spans residues 452-504 (GQKRASEDTTSGSPPKKSSAGPKRDARQIYNPPSGKYSSNLGNFNYERSLQGK). Positions 454–475 (KRASEDTTSGSPPKKSSAGPKR) match the Nuclear localization signal motif. Residues Ser-462, Ser-464, and Ser-469 each carry the phosphoserine modification. Over residues 462-472 (SGSPPKKSSAG) the composition is skewed to low complexity. Polar residues predominate over residues 487–504 (KYSSNLGNFNYERSLQGK).

It belongs to the API5 family. Monomer. Interacts with FGF2 and ACIN1. In terms of processing, acetylation at Lys-251 impairs antiapoptotic function.

Its subcellular location is the nucleus. The protein resides in the cytoplasm. Antiapoptotic factor that may have a role in protein assembly. Negatively regulates ACIN1. By binding to ACIN1, it suppresses ACIN1 cleavage from CASP3 and ACIN1-mediated DNA fragmentation. Also known to efficiently suppress E2F1-induced apoptosis. This Pongo abelii (Sumatran orangutan) protein is Apoptosis inhibitor 5 (API5).